Consider the following 108-residue polypeptide: Dormancy-associated protein homolog 1 (108 aa).

The interval 28–59 (DIKGVGEGSSSKTVAAVAGSPGTPTTPGSARK) is disordered. Position 47 is a phosphoserine (Ser47). At Thr50 the chain carries Phosphothreonine.

The protein belongs to the DRM1/ARP family. Expressed mainly in the low bolt.

This Arabidopsis thaliana (Mouse-ear cress) protein is Dormancy-associated protein homolog 1.